The sequence spans 353 residues: AA9 family lytic polysaccharide monooxygenase A (353 aa).

Positions 1-19 (MKSTFGLLALAAAAKMAHA) are cleaved as a signal peptide. Residues His-20 and His-102 each coordinate Cu(2+). Cys-62 and Cys-183 form a disulfide bridge. His-169 serves as a coordination point for O2. Tyr-180 provides a ligand contact to Cu(2+). Over residues 266-276 (KPTTTTAAAPA) the composition is skewed to low complexity. The disordered stretch occupies residues 266–316 (KPTTTTAAAPAETDSCDGDDDDYETETPAPQASATQAPAPQRPAPQTPSGS). Residues 279–290 (DSCDGDDDDYET) are compositionally biased toward acidic residues. Residues 291-304 (ETPAPQASATQAPA) are compositionally biased toward low complexity. A CBM1 domain is found at 315 to 351 (GSVKEWYQCGGINYTGAKNCESGLVCKEWNPYYHQCI). Asn-327 carries an N-linked (GlcNAc...) asparagine glycan.

The protein belongs to the polysaccharide monooxygenase AA9 family. Requires Cu(2+) as cofactor.

Its subcellular location is the secreted. The enzyme catalyses [(1-&gt;4)-beta-D-glucosyl]n+m + reduced acceptor + O2 = 4-dehydro-beta-D-glucosyl-[(1-&gt;4)-beta-D-glucosyl]n-1 + [(1-&gt;4)-beta-D-glucosyl]m + acceptor + H2O.. In terms of biological role, lytic polysaccharide monooxygenase (LPMO) that depolymerizes crystalline and amorphous polysaccharides via the oxidation of scissile alpha- or beta-(1-4)-glycosidic bonds, yielding C4 oxidation products. Catalysis by LPMOs requires the reduction of the active-site copper from Cu(II) to Cu(I) by a reducing agent and H(2)O(2) or O(2) as a cosubstrate. The protein is AA9 family lytic polysaccharide monooxygenase A (eglD) of Aspergillus clavatus (strain ATCC 1007 / CBS 513.65 / DSM 816 / NCTC 3887 / NRRL 1 / QM 1276 / 107).